Here is a 166-residue protein sequence, read N- to C-terminus: Ubiquitin-conjugating enzyme E2 13 (166 aa).

In terms of domain architecture, UBC core spans 4-164 (QACLLLQKQL…VSRCVRKSQE (161 aa)). Catalysis depends on Cys89, which acts as the Glycyl thioester intermediate.

The protein belongs to the ubiquitin-conjugating enzyme family.

It carries out the reaction S-ubiquitinyl-[E1 ubiquitin-activating enzyme]-L-cysteine + [E2 ubiquitin-conjugating enzyme]-L-cysteine = [E1 ubiquitin-activating enzyme]-L-cysteine + S-ubiquitinyl-[E2 ubiquitin-conjugating enzyme]-L-cysteine.. It participates in protein modification; protein ubiquitination. Accepts the ubiquitin from the E1 complex and catalyzes its covalent attachment to other proteins. Involved in the formation of multiubiquitin chains. Signal the protein for selective degradation. This Arabidopsis thaliana (Mouse-ear cress) protein is Ubiquitin-conjugating enzyme E2 13 (UBC13).